The sequence spans 373 residues: tRNA-specific 2-thiouridylase MnmA (373 aa).

Residues 12-19 (GMSGGVDS) and methionine 38 contribute to the ATP site. An interaction with target base in tRNA region spans residues 98-100 (NPD). Catalysis depends on cysteine 103, which acts as the Nucleophile. Cysteine 103 and cysteine 200 are oxidised to a cystine. ATP is bound at residue glycine 127. The interaction with tRNA stretch occupies residues 150-152 (KDQ). Cysteine 200 functions as the Cysteine persulfide intermediate in the catalytic mechanism. An interaction with tRNA region spans residues 312-313 (RY).

It belongs to the MnmA/TRMU family.

The protein resides in the cytoplasm. The catalysed reaction is S-sulfanyl-L-cysteinyl-[protein] + uridine(34) in tRNA + AH2 + ATP = 2-thiouridine(34) in tRNA + L-cysteinyl-[protein] + A + AMP + diphosphate + H(+). Catalyzes the 2-thiolation of uridine at the wobble position (U34) of tRNA, leading to the formation of s(2)U34. The polypeptide is tRNA-specific 2-thiouridylase MnmA (Streptococcus thermophilus (strain CNRZ 1066)).